Consider the following 419-residue polypeptide: RNA polymerase sigma factor sigD, chloroplastic (419 aa).

The N-terminal 52 residues, M1–C52, are a transit peptide targeting the chloroplast. The Polymerase core binding motif lies at D207–A220. Positions F377–G396 form a DNA-binding region, H-T-H motif.

The protein belongs to the sigma-70 factor family. In terms of tissue distribution, mostly expressed in leaves, and to a lesser extent in roots. Present in seedlings.

It localises to the plastid. It is found in the chloroplast. Sigma factors are initiation factors that promote the attachment of plastid-encoded RNA polymerase (PEP) to specific initiation sites and are then released. Regulates transcription of the ndhF gene which codes for a subunit of the plastid NDH [NAD(P)H dehydrogenase] complex. This chain is RNA polymerase sigma factor sigD, chloroplastic (SIGD), found in Arabidopsis thaliana (Mouse-ear cress).